A 70-amino-acid chain; its full sequence is DNA-directed RNA polymerase subunit omega (70 aa).

The protein belongs to the RNA polymerase subunit omega family. As to quaternary structure, the RNAP catalytic core consists of 2 alpha, 1 beta, 1 beta' and 1 omega subunit. When a sigma factor is associated with the core the holoenzyme is formed, which can initiate transcription.

It catalyses the reaction RNA(n) + a ribonucleoside 5'-triphosphate = RNA(n+1) + diphosphate. Its function is as follows. Promotes RNA polymerase assembly. Latches the N- and C-terminal regions of the beta' subunit thereby facilitating its interaction with the beta and alpha subunits. The protein is DNA-directed RNA polymerase subunit omega of Pelobacter propionicus (strain DSM 2379 / NBRC 103807 / OttBd1).